The following is a 211-amino-acid chain: Probable nicotinate-nucleotide adenylyltransferase (211 aa).

The protein belongs to the NadD family.

It catalyses the reaction nicotinate beta-D-ribonucleotide + ATP + H(+) = deamido-NAD(+) + diphosphate. Its pathway is cofactor biosynthesis; NAD(+) biosynthesis; deamido-NAD(+) from nicotinate D-ribonucleotide: step 1/1. Its function is as follows. Catalyzes the reversible adenylation of nicotinate mononucleotide (NaMN) to nicotinic acid adenine dinucleotide (NaAD). This is Probable nicotinate-nucleotide adenylyltransferase from Desulfotalea psychrophila (strain LSv54 / DSM 12343).